Reading from the N-terminus, the 363-residue chain is 3-dehydroquinate synthase (363 aa).

NAD(+) contacts are provided by residues 72–77 (SGEQSK), 106–110 (GVIGD), 130–131 (TT), lysine 142, and lysine 151. Residues glutamate 184, histidine 246, and histidine 263 each contribute to the Zn(2+) site.

Belongs to the sugar phosphate cyclases superfamily. Dehydroquinate synthase family. Requires Co(2+) as cofactor. Zn(2+) serves as cofactor. The cofactor is NAD(+).

Its subcellular location is the cytoplasm. The enzyme catalyses 7-phospho-2-dehydro-3-deoxy-D-arabino-heptonate = 3-dehydroquinate + phosphate. Its pathway is metabolic intermediate biosynthesis; chorismate biosynthesis; chorismate from D-erythrose 4-phosphate and phosphoenolpyruvate: step 2/7. Its function is as follows. Catalyzes the conversion of 3-deoxy-D-arabino-heptulosonate 7-phosphate (DAHP) to dehydroquinate (DHQ). This chain is 3-dehydroquinate synthase, found in Bacillus pumilus (strain SAFR-032).